Here is a 259-residue protein sequence, read N- to C-terminus: DNA-directed RNA polymerase 30 kDa polypeptide (259 aa).

The TFIIS-type zinc-finger motif lies at 155–195; sequence YNTPCPNCKSRNTTPMMIQTRAADEPPLVRHACRDCKQHFK. Zn(2+)-binding residues include Cys-159, Cys-162, Cys-187, and Cys-190. Positions 220–259 are disordered; that stretch reads EILPDNNPSPPESPEPASPIDDGLIRVTFDRNDEPPEDDE. Residues 226–236 show a composition bias toward pro residues; sequence NPSPPESPEPA.

Belongs to the poxviridae DNA-directed RNA polymerase 30 kDa subunit family. In terms of assembly, the DNA-dependent RNA polymerase (vRNAP) consists of eight subunits encoded by early viral genes and termed according to their apparent molecular masses Rpo147, Rpo132, Rpo35, Rpo30, Rpo22, Rpo19, Rpo18, and Rpo7. The same holoenzyme, with the addition of the transcription-specificity factor RAP94, is used for early gene expression.

It is found in the virion. The protein resides in the host cytoplasm. The enzyme catalyses RNA(n) + a ribonucleoside 5'-triphosphate = RNA(n+1) + diphosphate. In terms of biological role, part of the DNA-dependent RNA polymerase which catalyzes the transcription of viral DNA into RNA using the four ribonucleoside triphosphates as substrates. Responsible for the transcription of early, intermediate and late genes. DNA-dependent RNA polymerase associates with the early transcription factor (ETF), itself composed of OPG118 and OPG134, thereby allowing the early genes transcription. Late transcription, and probably also intermediate transcription, require newly synthesized RNA polymerase. This chain is DNA-directed RNA polymerase 30 kDa polypeptide (OPG066), found in Variola virus (isolate Human/India/Ind3/1967) (VARV).